We begin with the raw amino-acid sequence, 145 residues long: uncharacterized protein (145 aa).

Over residues 1–18 the composition is skewed to basic and acidic residues; sequence MAEQQPSKEEKKEDKKDE. The interval 1-61 is disordered; the sequence is MAEQQPSKEE…CTEGEWDASD (61 aa).

This is an uncharacterized protein from Caenorhabditis elegans.